A 276-amino-acid chain; its full sequence is Putative pyruvate, phosphate dikinase regulatory protein 1 (276 aa).

Residue 157-164 (GVSRTSKT) coordinates ADP.

Belongs to the pyruvate, phosphate/water dikinase regulatory protein family. PDRP subfamily.

The enzyme catalyses N(tele)-phospho-L-histidyl/L-threonyl-[pyruvate, phosphate dikinase] + ADP = N(tele)-phospho-L-histidyl/O-phospho-L-threonyl-[pyruvate, phosphate dikinase] + AMP + H(+). It catalyses the reaction N(tele)-phospho-L-histidyl/O-phospho-L-threonyl-[pyruvate, phosphate dikinase] + phosphate + H(+) = N(tele)-phospho-L-histidyl/L-threonyl-[pyruvate, phosphate dikinase] + diphosphate. Functionally, bifunctional serine/threonine kinase and phosphorylase involved in the regulation of the pyruvate, phosphate dikinase (PPDK) by catalyzing its phosphorylation/dephosphorylation. The protein is Putative pyruvate, phosphate dikinase regulatory protein 1 of Staphylococcus haemolyticus (strain JCSC1435).